We begin with the raw amino-acid sequence, 532 residues long: Probable galacturonosyltransferase 14 (532 aa).

Residues 1–40 lie on the Cytoplasmic side of the membrane; it reads MQLHISPSMRSITISSSNEFIDLMKIKVAARHISYRTLFH. Residues 41-61 traverse the membrane as a helical; Signal-anchor for type II membrane protein segment; the sequence is TILILAFLLPFVFILTAVVTL. The Lumenal portion of the chain corresponds to 62–532; that stretch reads EGVNKCSSID…DFIKNCHILE (471 aa). 4 N-linked (GlcNAc...) asparagine glycosylation sites follow: asparagine 305, asparagine 395, asparagine 444, and asparagine 519.

The protein belongs to the glycosyltransferase 8 family. In terms of tissue distribution, expressed in roots, inflorescences, siliques, leaves and stems. Accumulates in pollen grains.

The protein localises to the golgi apparatus membrane. It functions in the pathway glycan metabolism; pectin biosynthesis. Its function is as follows. May be involved in pectin and/or xylans biosynthesis in cell walls. Together with GAUT13, required for pollen tube growth, possibly through the regulation of pectin biosynthesis and repartition in the pollen tube wall. This chain is Probable galacturonosyltransferase 14, found in Arabidopsis thaliana (Mouse-ear cress).